A 180-amino-acid polypeptide reads, in one-letter code: Ferric nitrobindin-like protein (180 aa).

A GXWXGXG motif is present at residues 21 to 27; it reads GRWEGAG.

Belongs to the nitrobindin family.

In Kineococcus radiotolerans (strain ATCC BAA-149 / DSM 14245 / SRS30216), this protein is Ferric nitrobindin-like protein.